The sequence spans 460 residues: Methylenetetrahydrofolate--tRNA-(uracil-5-)-methyltransferase TrmFO (460 aa).

12–17 (GGGLAG) contacts FAD.

The protein belongs to the MnmG family. TrmFO subfamily. The cofactor is FAD.

The protein resides in the cytoplasm. It carries out the reaction uridine(54) in tRNA + (6R)-5,10-methylene-5,6,7,8-tetrahydrofolate + NADH + H(+) = 5-methyluridine(54) in tRNA + (6S)-5,6,7,8-tetrahydrofolate + NAD(+). The catalysed reaction is uridine(54) in tRNA + (6R)-5,10-methylene-5,6,7,8-tetrahydrofolate + NADPH + H(+) = 5-methyluridine(54) in tRNA + (6S)-5,6,7,8-tetrahydrofolate + NADP(+). Its function is as follows. Catalyzes the folate-dependent formation of 5-methyl-uridine at position 54 (M-5-U54) in all tRNAs. The chain is Methylenetetrahydrofolate--tRNA-(uracil-5-)-methyltransferase TrmFO from Crocosphaera subtropica (strain ATCC 51142 / BH68) (Cyanothece sp. (strain ATCC 51142)).